The following is a 958-amino-acid chain: Probable transport protein MmpL1 (958 aa).

Transmembrane regions (helical) follow at residues 19-39 (ALSLPIILFWVALTIVVNVVA), 192-212 (SLHTITGISIAVIAIMLFIAY), 216-236 (SAALIMLLTVGLELLAVRGII), 252-272 (VNVLVALTIAASTDYIIFLVG), 295-315 (TAHVVLASGLTVAGAMYCLGF), 329-349 (AIGLVTVMLASLTLAPAIIAV), 377-397 (WPGPVLAATLLIALIGLLALP), 762-782 (YDVMIAVVASLCLIFIIMLGI), 791-811 (VIVGTVALSLGSAFGLSVLIW), 814-834 (ILHMPLHWLVLPMAIIVMLAV), 868-888 (VVTIAGLVFAFTMGSMVASDL), and 906-927 (TLVVRSYMTPALATLLGRWFWW).

It belongs to the resistance-nodulation-cell division (RND) (TC 2.A.6) family. MmpL subfamily.

Its subcellular location is the cell membrane. This Mycobacterium tuberculosis (strain CDC 1551 / Oshkosh) protein is Probable transport protein MmpL1 (mmpL1).